Consider the following 879-residue polypeptide: MGRPAPRPLLLALLSLAVCRGRVVRVPAGTLVRVVGTELVIPCNVSDYDGPSEQNFDWSFSSSGSSFVELASTWEVGFPAQLYRERLQRGDILLRRTANDAVELHIKNVQPSDQGHYKCSTPSTDATVQGNYEDTVQVKVLADALVVGPSSRPPPGLSLREGEPFELRCIASTTSPLHTHLALRWELHRGPVHRSILALSHEGRFHPGPGYEQRYHSGDVRLDTVGSDAYRLSVARALSADQGSYRCVVSEWITEQGSWQEIQEKAVEVATVVIQPTALQLAVPRTVSVTEGKDLDLSCNITTDRVDDVRPEVTWYFKKTPDTSLLASHMLARLDRDSLVHSSPHVALSHVDTRSYHLLVRDVSKENSGYYLCLVALWAPGHNRSWHKVAEAMSAPSGVSVTWLEPEYQVYLNASKVPGFSDDPTELQCRVIDTKRLEAGVRLTVSWYYRMTRRNDDVVASELLAVMDGDWTLRYGERSKQRAQDGEFIFSKEHTDTFNFRIQRTTEEDRGNYYCVVSAWTRQRNNSWVKSKDVFSKPVNIFWASEDSVLVVKARQPKPFFAAGNTFEMTCKVSSKNIKSPRYSVLITAEKPVGDLSSPNETKYIISLDQDSVVKLENWTDASRVDGVVLEKVQEDEFRYRMYQTQVSDAGLYRCMVTAWSPIGGSLWREAATSLSNPIEIDFQTSGPTFNASVHSDTPSVTRGDLIKLFCIVTVEGAVLDPDDMAFDVSWFAVHSFGLDKAPVLLSSLDRKGVVTTGQRDWKSTVSLERVSVLEFLLQVHGSEDQDFGNYYCSVTPWVRSPTGSWQREAEIHSRPIFITVKMDVLNAFKYPLLIGVGLSTVIGLLSCLIGYCSSHWCCKKEVRETRRERRRLMSMEMD.

An N-terminal signal peptide occupies residues 1–21 (MGRPAPRPLLLALLSLAVCRG). Ig-like C2-type domains follow at residues 22–137 (RVVR…DTVQ) and 149–263 (PSSR…QEIQ). The Extracellular segment spans residues 22–832 (RVVRVPAGTL…MDVLNAFKYP (811 aa)). 2 disulfide bridges follow: Cys43-Cys119 and Cys169-Cys247. A glycan (N-linked (GlcNAc...) asparagine) is linked at Asn44. A Cell attachment site motif is present at residues 89-91 (RGD). Phosphothreonine is present on Thr271. Ig-like C2-type domains lie at 276 to 389 (PTAL…WHKV), 406 to 536 (PEYQ…DVFS), 544 to 662 (ASED…AWSP), and 688 to 813 (PTFN…AEIH). An intrachain disulfide couples Cys299 to Cys373. N-linked (GlcNAc...) asparagine glycans are attached at residues Asn300, Asn383, and Asn413. An Endoplasmic reticulum retention signal motif is present at residues 424–427 (PTEL). A disulfide bond links Cys429 and Cys515. 4 N-linked (GlcNAc...) asparagine glycosylation sites follow: Asn525, Asn600, Asn618, and Asn691. A disulfide bridge connects residues Cys571 and Cys655. The Cell attachment site motif lies at 703–705 (RGD). Cys711 and Cys793 are disulfide-bonded. The chain crosses the membrane as a helical span at residues 833–853 (LLIGVGLSTVIGLLSCLIGYC). Over 854-879 (SSHWCCKKEVRETRRERRRLMSMEMD) the chain is Cytoplasmic.

As to quaternary structure, interacts with CD9 and CD81. Part of a complex composed of CD9, CD81 and IGSF8. Also seems to interact with CD63, CD82 and CD151. Expressed in myoblasts (at protein level).

It localises to the endoplasmic reticulum membrane. The protein resides in the golgi apparatus. Its subcellular location is the trans-Golgi network membrane. Its function is as follows. Inhibits the binding of prostaglandin F2-alpha (PGF2-alpha) to its specific FP receptor, by decreasing the receptor number rather than the affinity constant. Functional coupling with the prostaglandin F2-alpha receptor seems to occur. In myoblasts, associates with tetraspanins CD9 and CD81 to prevent myotube fusion during muscle regeneration. In Mus musculus (Mouse), this protein is Prostaglandin F2 receptor negative regulator (Ptgfrn).